The following is a 531-amino-acid chain: MATTATPQLLGGSVPQQWQTCLLVLLPVLLVSYYLLTSRSRNRSRSGKLGGAPRLPPGPAQLPILGNLHLLGPLPHKNLRELARRYGPVMQLRLGTVPTVVVSSAEAAREVLKVHDVDCCSRPASPGPKRLSYDLKNVGFAPYGEYWREMRKLFALELLSMRRVKAACYAREQEMDRLVADLDRAAASKASIVLNDHVFALTDGIIGTVAFGNIYASKQFAHKERFQHVLDDAMDMMASFSAEDFFPNAAGRLADRLSGFLARRERIFNELDVFFEKVIDQHMDPARPVPDNGGDLVDVLINLCKEHDGTLRFTRDHVKAIVLDTFIGAIDTSSVTILWAMSELMRKPQVLRKAQAEVRAAVGDDKPRVNSEDAAKIPYLKMVVKETLRLHPPATLLVPRETMRDTTICGYDVPANTRVFVNAWAIGRDPASWPAPDEFNPDRFVGSDVDYYGSHFELIPFGAGRRICPGLTMGETNVTFTLANLLYCYDWALPGAMKPEDVSMEETGALTFHRKTPLVVVPTKYKNRRAA.

A helical membrane pass occupies residues 18–38 (WQTCLLVLLPVLLVSYYLLTS). Residues Arg122, Arg151, Arg466, and Cys468 each coordinate heme b.

This sequence belongs to the cytochrome P450 family. The cofactor is heme b.

The protein localises to the endoplasmic reticulum membrane. It carries out the reaction (E)-4-hydroxyphenylacetaldehyde oxime + reduced [NADPH--hemoprotein reductase] + O2 = (S)-4-hydroxymandelonitrile + oxidized [NADPH--hemoprotein reductase] + 2 H2O + H(+). The catalysed reaction is (E)-4-hydroxyphenylacetaldehyde oxime = (Z)-(4-hydroxyphenyl)acetaldehyde oxime. The enzyme catalyses (Z)-(4-hydroxyphenyl)acetaldehyde oxime = 4-hydroxyphenylacetonitrile + H2O. It catalyses the reaction 4-hydroxyphenylacetonitrile + reduced [NADPH--hemoprotein reductase] + O2 = (S)-4-hydroxymandelonitrile + oxidized [NADPH--hemoprotein reductase] + H2O + H(+). It functions in the pathway secondary metabolite biosynthesis; dhurrin biosynthesis; dhurrin from L-tyrosine: step 2/3. In terms of biological role, cytochrome P450 involved in the biosynthesis of the cyanogenic glucoside dhurrin. Catalyzes the conversion of p-hydroxyphenylacetaldoxime to p-hydroxymandelonitrile via three different and successive activities: isomerization of the (E) isomer to the (Z) isomer of p-hydroxyphenylacetaldoxime, followed by dehydration of the oxime to the corresponding nitrile, and C-hydroxylation of the nitrile to produce p-hydroxymandelonitrile. This Sorghum bicolor (Sorghum) protein is 4-hydroxyphenylacetaldehyde oxime monooxygenase.